The chain runs to 140 residues: Protein SamA (140 aa).

Catalysis depends on for autocatalytic cleavage activity residues Ser-61 and Lys-98.

It belongs to the peptidase S24 family.

Involved in UV protection and mutation. This Salmonella typhimurium (strain LT2 / SGSC1412 / ATCC 700720) protein is Protein SamA (samA).